We begin with the raw amino-acid sequence, 313 residues long: Solute carrier family 35 member E3 (313 aa).

Transmembrane regions (helical) follow at residues 17 to 37 (GLLL…WIYV), 40 to 60 (GFPN…GLYV), 77 to 97 (LLLL…SLQN), 100 to 120 (IGTY…IQTL), 130 to 147 (IRLT…NSYY), 153 to 173 (FLGT…QVWV), 187 to 206 (LLYY…VPFF), 225 to 245 (LMVL…YWII), 252 to 272 (TYNM…YVLF), and 275 to 295 (PLSI…LAYT).

The protein belongs to the TPT transporter family. SLC35E subfamily.

Its subcellular location is the membrane. Putative transporter. This chain is Solute carrier family 35 member E3 (SLC35E3), found in Bos taurus (Bovine).